The following is a 337-amino-acid chain: MIQQAIAKVLEGEDLTRAEAASVMTEIADGGATPAQSGAFLAALRMKGETVDEIAGAADVMRQRADRVRVDRDVFIDTCGTGGDGRHTFNISTTAAFVAAGAGVCVAKHGNRAVSSRSGSADVLAALGVNVDADKETVERCIEEVGIGFLFAVRLHPAFKAIAGVRRELGVRTIFNLLGPLANPAGARHQVLGVYEARWVPVLGGVLAALGAAHAFVVHGEGLDEIAVTGMTHVCEVRDGQVERYTIRPEDLGLPRRDAAELVGGDAAANARIVTDVLEGQAGGPRDAVLANAAAALVCAGAAKDLRDGVARAARSIDSGAAREKLRQLVAATTVPA.

Residues Gly80, 83-84 (GD), Thr88, 90-93 (NIST), 108-116 (KHGNRAVSS), and Ser120 each bind 5-phospho-alpha-D-ribose 1-diphosphate. Gly80 contacts anthranilate. Ser92 serves as a coordination point for Mg(2+). Residue Asn111 participates in anthranilate binding. Residue Arg166 coordinates anthranilate. 2 residues coordinate Mg(2+): Asp224 and Glu225.

The protein belongs to the anthranilate phosphoribosyltransferase family. In terms of assembly, homodimer. It depends on Mg(2+) as a cofactor.

It catalyses the reaction N-(5-phospho-beta-D-ribosyl)anthranilate + diphosphate = 5-phospho-alpha-D-ribose 1-diphosphate + anthranilate. Its pathway is amino-acid biosynthesis; L-tryptophan biosynthesis; L-tryptophan from chorismate: step 2/5. Its function is as follows. Catalyzes the transfer of the phosphoribosyl group of 5-phosphorylribose-1-pyrophosphate (PRPP) to anthranilate to yield N-(5'-phosphoribosyl)-anthranilate (PRA). This is Anthranilate phosphoribosyltransferase from Anaeromyxobacter sp. (strain K).